The primary structure comprises 142 residues: uncharacterized protein (142 aa).

This is an uncharacterized protein from Mycobacterium tuberculosis (strain CDC 1551 / Oshkosh).